The sequence spans 131 residues: Transcription antitermination protein NusB (131 aa).

This sequence belongs to the NusB family.

Functionally, involved in transcription antitermination. Required for transcription of ribosomal RNA (rRNA) genes. Binds specifically to the boxA antiterminator sequence of the ribosomal RNA (rrn) operons. The chain is Transcription antitermination protein NusB from Ligilactobacillus salivarius (strain UCC118) (Lactobacillus salivarius).